The following is a 92-amino-acid chain: Small ribosomal subunit protein uS19 (92 aa).

This sequence belongs to the universal ribosomal protein uS19 family.

In terms of biological role, protein S19 forms a complex with S13 that binds strongly to the 16S ribosomal RNA. The protein is Small ribosomal subunit protein uS19 of Corynebacterium efficiens (strain DSM 44549 / YS-314 / AJ 12310 / JCM 11189 / NBRC 100395).